Reading from the N-terminus, the 686-residue chain is DNA ligase (686 aa).

NAD(+)-binding positions include 31-35, 80-81, and Glu-109; these read DSEYD and SL. Catalysis depends on Lys-111, which acts as the N6-AMP-lysine intermediate. NAD(+)-binding residues include Arg-132, Glu-166, Lys-280, and Lys-304. The Zn(2+) site is built by Cys-430, Cys-433, Cys-448, and Cys-453. The BRCT domain maps to 611–686; that stretch reads NVEGILSGKT…IWSEQDLLDL (76 aa).

The protein belongs to the NAD-dependent DNA ligase family. LigA subfamily. The cofactor is Mg(2+). Requires Mn(2+) as cofactor.

It catalyses the reaction NAD(+) + (deoxyribonucleotide)n-3'-hydroxyl + 5'-phospho-(deoxyribonucleotide)m = (deoxyribonucleotide)n+m + AMP + beta-nicotinamide D-nucleotide.. Its function is as follows. DNA ligase that catalyzes the formation of phosphodiester linkages between 5'-phosphoryl and 3'-hydroxyl groups in double-stranded DNA using NAD as a coenzyme and as the energy source for the reaction. It is essential for DNA replication and repair of damaged DNA. The polypeptide is DNA ligase (Lactococcus lactis subsp. cremoris (strain SK11)).